A 547-amino-acid polypeptide reads, in one-letter code: Chaperonin GroEL (547 aa).

ATP is bound by residues 30 to 33, Lys51, 87 to 91, Gly415, 479 to 481, and Asp495; these read TLGP, DGTTT, and NAA.

Belongs to the chaperonin (HSP60) family. Forms a cylinder of 14 subunits composed of two heptameric rings stacked back-to-back. Interacts with the co-chaperonin GroES.

Its subcellular location is the cytoplasm. It catalyses the reaction ATP + H2O + a folded polypeptide = ADP + phosphate + an unfolded polypeptide.. Together with its co-chaperonin GroES, plays an essential role in assisting protein folding. The GroEL-GroES system forms a nano-cage that allows encapsulation of the non-native substrate proteins and provides a physical environment optimized to promote and accelerate protein folding. This is Chaperonin GroEL from Pseudomonas syringae pv. tomato (strain ATCC BAA-871 / DC3000).